The following is an 860-amino-acid chain: Leucine--tRNA ligase (860 aa).

Positions 42-52 (PYPSGRLHMGH) match the 'HIGH' region motif. The 'KMSKS' region motif lies at 619-623 (KMSKS). An ATP-binding site is contributed by Lys622.

This sequence belongs to the class-I aminoacyl-tRNA synthetase family.

The protein localises to the cytoplasm. The catalysed reaction is tRNA(Leu) + L-leucine + ATP = L-leucyl-tRNA(Leu) + AMP + diphosphate. The sequence is that of Leucine--tRNA ligase from Klebsiella pneumoniae subsp. pneumoniae (strain ATCC 700721 / MGH 78578).